The sequence spans 315 residues: 4-hydroxy-3-methylbut-2-enyl diphosphate reductase (315 aa).

Cys12 lines the [4Fe-4S] cluster pocket. The (2E)-4-hydroxy-3-methylbut-2-enyl diphosphate site is built by His43 and His81. His43 and His81 together coordinate dimethylallyl diphosphate. 2 residues coordinate isopentenyl diphosphate: His43 and His81. Cys103 provides a ligand contact to [4Fe-4S] cluster. Residue His131 coordinates (2E)-4-hydroxy-3-methylbut-2-enyl diphosphate. Position 131 (His131) interacts with dimethylallyl diphosphate. An isopentenyl diphosphate-binding site is contributed by His131. The active-site Proton donor is the Glu133. Thr170 contributes to the (2E)-4-hydroxy-3-methylbut-2-enyl diphosphate binding site. [4Fe-4S] cluster is bound at residue Cys198. Ser226, Asn228, and Ser271 together coordinate (2E)-4-hydroxy-3-methylbut-2-enyl diphosphate. Residues Ser226, Asn228, and Ser271 each coordinate dimethylallyl diphosphate. Isopentenyl diphosphate-binding residues include Ser226, Asn228, and Ser271.

The protein belongs to the IspH family. It depends on [4Fe-4S] cluster as a cofactor.

It carries out the reaction isopentenyl diphosphate + 2 oxidized [2Fe-2S]-[ferredoxin] + H2O = (2E)-4-hydroxy-3-methylbut-2-enyl diphosphate + 2 reduced [2Fe-2S]-[ferredoxin] + 2 H(+). The catalysed reaction is dimethylallyl diphosphate + 2 oxidized [2Fe-2S]-[ferredoxin] + H2O = (2E)-4-hydroxy-3-methylbut-2-enyl diphosphate + 2 reduced [2Fe-2S]-[ferredoxin] + 2 H(+). The protein operates within isoprenoid biosynthesis; dimethylallyl diphosphate biosynthesis; dimethylallyl diphosphate from (2E)-4-hydroxy-3-methylbutenyl diphosphate: step 1/1. Its pathway is isoprenoid biosynthesis; isopentenyl diphosphate biosynthesis via DXP pathway; isopentenyl diphosphate from 1-deoxy-D-xylulose 5-phosphate: step 6/6. In terms of biological role, catalyzes the conversion of 1-hydroxy-2-methyl-2-(E)-butenyl 4-diphosphate (HMBPP) into a mixture of isopentenyl diphosphate (IPP) and dimethylallyl diphosphate (DMAPP). Acts in the terminal step of the DOXP/MEP pathway for isoprenoid precursor biosynthesis. This chain is 4-hydroxy-3-methylbut-2-enyl diphosphate reductase, found in Geobacillus sp. (strain WCH70).